The sequence spans 194 residues: Heme transporter hrg-1 (194 aa).

4 helical membrane-spanning segments follow: residues 45 to 65, 71 to 91, 113 to 133, and 143 to 163; these read QIWI…VFAI, IAVT…HLHL, GATV…VAGI, and LMGA…KWSA. The Di-leucine motif signature appears at 182–183; that stretch reads LL.

This sequence belongs to the HRG family. Specifically expressed in the intestinal cells in larvae and adults.

The protein localises to the endosome membrane. Its subcellular location is the lysosome membrane. Its function is as follows. Heme transporter that regulates intracellular heme availability through the endosomal or lysosomal compartment. This chain is Heme transporter hrg-1 (hrg-1), found in Caenorhabditis elegans.